The sequence spans 174 residues: Granulocyte colony-stimulating factor (174 aa).

Disulfide bonds link Cys-36–Cys-42 and Cys-64–Cys-74. The O-linked (GalNAc...) threonine glycan is linked to Thr-133.

It belongs to the IL-6 superfamily. Monomer. In terms of processing, O-glycosylated.

It localises to the secreted. Functionally, granulocyte/macrophage colony-stimulating factors are cytokines that act in hematopoiesis by controlling the production, differentiation, and function of 2 related white cell populations of the blood, the granulocytes and the monocytes-macrophages. This CSF induces granulocytes. The sequence is that of Granulocyte colony-stimulating factor (CSF3) from Ovis aries (Sheep).